A 696-amino-acid polypeptide reads, in one-letter code: UvrABC system protein B (696 aa).

Residues glutamate 45–proline 434 enclose the Helicase ATP-binding domain. ATP is bound at residue glycine 58–threonine 65. The Beta-hairpin motif lies at tyrosine 111–valine 134. Residues glutamine 450 to isoleucine 616 enclose the Helicase C-terminal domain. The 36-residue stretch at glycine 647–glutamine 682 folds into the UVR domain.

This sequence belongs to the UvrB family. In terms of assembly, forms a heterotetramer with UvrA during the search for lesions. Interacts with UvrC in an incision complex.

The protein resides in the cytoplasm. The UvrABC repair system catalyzes the recognition and processing of DNA lesions. A damage recognition complex composed of 2 UvrA and 2 UvrB subunits scans DNA for abnormalities. Upon binding of the UvrA(2)B(2) complex to a putative damaged site, the DNA wraps around one UvrB monomer. DNA wrap is dependent on ATP binding by UvrB and probably causes local melting of the DNA helix, facilitating insertion of UvrB beta-hairpin between the DNA strands. Then UvrB probes one DNA strand for the presence of a lesion. If a lesion is found the UvrA subunits dissociate and the UvrB-DNA preincision complex is formed. This complex is subsequently bound by UvrC and the second UvrB is released. If no lesion is found, the DNA wraps around the other UvrB subunit that will check the other stand for damage. This Ralstonia nicotianae (strain ATCC BAA-1114 / GMI1000) (Ralstonia solanacearum) protein is UvrABC system protein B.